The sequence spans 203 residues: dITP/XTP pyrophosphatase (203 aa).

Ser-9–Lys-14 contributes to the substrate binding site. Residues Glu-42 and Asp-72 each contribute to the Mg(2+) site. Asp-72 functions as the Proton acceptor in the catalytic mechanism. Substrate is bound by residues Ser-73, Phe-161–Asp-164, Lys-184, and His-189–Arg-190.

The protein belongs to the HAM1 NTPase family. As to quaternary structure, homodimer. Mg(2+) serves as cofactor.

The catalysed reaction is XTP + H2O = XMP + diphosphate + H(+). The enzyme catalyses dITP + H2O = dIMP + diphosphate + H(+). It catalyses the reaction ITP + H2O = IMP + diphosphate + H(+). Functionally, pyrophosphatase that catalyzes the hydrolysis of nucleoside triphosphates to their monophosphate derivatives, with a high preference for the non-canonical purine nucleotides XTP (xanthosine triphosphate), dITP (deoxyinosine triphosphate) and ITP. Seems to function as a house-cleaning enzyme that removes non-canonical purine nucleotides from the nucleotide pool, thus preventing their incorporation into DNA/RNA and avoiding chromosomal lesions. The polypeptide is dITP/XTP pyrophosphatase (Acidobacterium capsulatum (strain ATCC 51196 / DSM 11244 / BCRC 80197 / JCM 7670 / NBRC 15755 / NCIMB 13165 / 161)).